The chain runs to 524 residues: Metalloendopeptidase OMA1, mitochondrial (524 aa).

The transit peptide at 1–13 (MSFICGLQSAARN) directs the protein to the mitochondrion. The propeptide occupies 14 to 143 (HVFFRFNSLS…RNFHTSPRFQ (130 aa)). Residues 144 to 195 (AAPVPLLLMILKPVQKLFAIIVGRGIRKWWQALPPNKKEVVKENIRKNKWKL) lie on the Mitochondrial matrix side of the membrane. The cardiolipin-binding stretch occupies residues 148-167 (PLLLMILKPVQKLFAIIVGR). The tract at residues 165–195 (VGRGIRKWWQALPPNKKEVVKENIRKNKWKL) is stress-sensor region. The chain crosses the membrane as a helical span at residues 196–216 (FLGLSSFGLLFVVFYFTHLEV). Histidine 327 provides a ligand contact to Zn(2+). The active site involves glutamate 328. Residues histidine 331 and glutamate 392 each coordinate Zn(2+). Cysteine 407 and cysteine 465 are disulfide-bonded.

Belongs to the peptidase M48 family. Homooligomer. It depends on Zn(2+) as a cofactor. Post-translationally, may form a redox-dependent disulfide bond. Exists in a semi-oxidized state and is activated by prolonged hypoxia. Autocatalytically cleaved in response to mitochondrial depolarization both at the N-terminus and C-terminus to generate the short active form (S-OMA1). Autocatalytic processing at the C-terminus takes place at residues 447-456. The S-OMA1 form is unstable. OMA1 pre-processing by AFG3L2 may participate in maturation before OMA1 autocatalytic cleavage. Degraded by YMEL1 in response to membrane depolarization. Protein turnover is regulated by prohibitin (PHB and PHB2), which promotes degradation of OMA1 in a cardiolipin-binding manner. Widely expressed, with strong expression in the heart, skeletal muscle, kidney and liver.

The protein resides in the mitochondrion inner membrane. Its activity is regulated as follows. Protease activity is activated upon autocatalytic cleavage in response to mitochondrial depolarization. Functionally, metalloprotease that is part of the quality control system in the inner membrane of mitochondria. Activated in response to various mitochondrial stress, leading to the proteolytic cleavage of target proteins, such as OPA1, UQCC3 and DELE1. Involved in the fusion of the mitochondrial inner membranes by mediating cleavage of OPA1 at S1 position, generating the soluble OPA1 (S-OPA1), which cooperates with the membrane form (L-OPA1) to coordinate the fusion of mitochondrial inner membranes. Following stress conditions that induce loss of mitochondrial membrane potential, mediates cleavage of OPA1, leading to excess production of soluble OPA1 (S-OPA1) and negative regulation of mitochondrial fusion. Involved in mitochondrial safeguard in response to transient mitochondrial membrane depolarization (flickering) by catalyzing cleavage of OPA1, leading to excess production of S-OPA1, preventing mitochondrial hyperfusion. Also acts as a regulator of apoptosis: upon BAK and BAX aggregation, mediates cleavage of OPA1, leading to the remodeling of mitochondrial cristae and allowing the release of cytochrome c from mitochondrial cristae. In depolarized mitochondria, may also act as a backup protease for PINK1 by mediating PINK1 cleavage and promoting its subsequent degradation by the proteasome. May also cleave UQCC3 in response to mitochondrial depolarization. Also acts as an activator of the integrated stress response (ISR): in response to mitochondrial stress, mediates cleavage of DELE1 to generate the processed form of DELE1 (S-DELE1), which translocates to the cytosol and activates EIF2AK1/HRI to trigger the ISR. Its role in mitochondrial quality control is essential for regulating lipid metabolism as well as to maintain body temperature and energy expenditure under cold-stress conditions. Binds cardiolipin, possibly regulating its protein turnover. Required for the stability of the respiratory supercomplexes. The chain is Metalloendopeptidase OMA1, mitochondrial from Homo sapiens (Human).